Reading from the N-terminus, the 352-residue chain is C-C chemokine receptor type 5 (352 aa).

Residues methionine 1 to alanine 30 are Extracellular-facing. Residue tyrosine 3 is modified to Sulfotyrosine. 2 O-linked (GalNAc...) serine glycosylation sites follow: serine 6 and serine 7. Sulfotyrosine occurs at positions 10, 14, and 15. 2 cysteine pairs are disulfide-bonded: cysteine 20-cysteine 269 and cysteine 101-cysteine 178. Residues arginine 31–cysteine 58 form a helical membrane-spanning segment. Residues lysine 59 to tyrosine 68 are Cytoplasmic-facing. Residues leucine 69–tyrosine 89 traverse the membrane as a helical segment. Topologically, residues alanine 90 to glutamine 102 are extracellular. A helical membrane pass occupies residues leucine 103–isoleucine 124. Residues aspartate 125–threonine 141 lie on the Cytoplasmic side of the membrane. A helical transmembrane segment spans residues valine 142–phenylalanine 166. Topologically, residues threonine 167 to isoleucine 198 are extracellular. The helical transmembrane segment at valine 199 to leucine 218 threads the bilayer. Over lysine 219–arginine 235 the chain is Cytoplasmic. Residues leucine 236–phenylalanine 260 form a helical membrane-spanning segment. At glutamine 261–glutamine 277 the chain is on the extracellular side. The helical transmembrane segment at alanine 278–glycine 301 threads the bilayer. Residues glutamate 302–leucine 352 are Cytoplasmic-facing. S-palmitoyl cysteine attachment occurs at residues cysteine 321, cysteine 323, and cysteine 324. Phosphoserine; by BARK1 occurs at positions 336, 337, 342, and 349.

The protein belongs to the G-protein coupled receptor 1 family. Interacts with PRAF2. Efficient ligand binding to CCL3/MIP-1alpha and CCL4/MIP-1beta requires sulfation, O-glycosylation and sialic acid modifications. Glycosylation on Ser-6 is required for efficient binding of CCL4. Interacts with GRK2. Interacts with ARRB1 and ARRB2. Interacts with CNIH4. Interacts with S100A4; this interaction stimulates T-lymphocyte chemotaxis. Post-translationally, sulfated on at least 2 of the N-terminal tyrosines. Sulfation is required for efficient binding of the chemokines, CCL3 and CCL4. Palmitoylation in the C-terminal is important for cell surface expression. In terms of processing, phosphorylation on serine residues in the C-terminal is stimulated by binding CC chemokines especially by APO-RANTES. Post-translationally, O-glycosylated, but not N-glycosylated. Ser-6 appears to be the major site even if Ser-7 may be also O-glycosylated. Also sialylated glycans present which contribute to chemokine binding. Thr-16 and Ser-17 may also be glycosylated and, if so, with small moieties such as a T-antigen.

It is found in the cell membrane. Its function is as follows. Receptor for a number of inflammatory CC-chemokines including CCL3/MIP-1-alpha, CCL4/MIP-1-beta and RANTES and subsequently transduces a signal by increasing the intracellular calcium ion level. May play a role in the control of granulocytic lineage proliferation or differentiation. Participates in T-lymphocyte migration to the infection site by acting as a chemotactic receptor. The sequence is that of C-C chemokine receptor type 5 (CCR5) from Gorilla gorilla gorilla (Western lowland gorilla).